A 235-amino-acid polypeptide reads, in one-letter code: UPF0758 protein A1S_2918 (235 aa).

The tract at residues 1–20 is disordered; sequence MNTSIKNWPEQERPRERLLQ. The segment covering 9-18 has biased composition (basic and acidic residues); sequence PEQERPRERL. One can recognise an MPN domain in the interval 105–227; sequence SLHSSHLVLD…SFSFAEQQLL (123 aa). Zn(2+) is bound by residues histidine 176, histidine 178, and aspartate 189. The JAMM motif motif lies at 176–189; the sequence is HNHPFGSPQPSPED.

This sequence belongs to the UPF0758 family.

The polypeptide is UPF0758 protein A1S_2918 (Acinetobacter baumannii (strain ATCC 17978 / DSM 105126 / CIP 53.77 / LMG 1025 / NCDC KC755 / 5377)).